We begin with the raw amino-acid sequence, 712 residues long: 1,4-alpha-glucan branching enzyme GlgB (712 aa).

The Nucleophile role is filled by Asp397. Catalysis depends on Glu450, which acts as the Proton donor.

It belongs to the glycosyl hydrolase 13 family. GlgB subfamily. In terms of assembly, monomer.

It carries out the reaction Transfers a segment of a (1-&gt;4)-alpha-D-glucan chain to a primary hydroxy group in a similar glucan chain.. The protein operates within glycan biosynthesis; glycogen biosynthesis. Its function is as follows. Catalyzes the formation of the alpha-1,6-glucosidic linkages in glycogen by scission of a 1,4-alpha-linked oligosaccharide from growing alpha-1,4-glucan chains and the subsequent attachment of the oligosaccharide to the alpha-1,6 position. This is 1,4-alpha-glucan branching enzyme GlgB from Bradyrhizobium sp. (strain BTAi1 / ATCC BAA-1182).